The following is a 201-amino-acid chain: 3-isopropylmalate dehydratase small subunit (201 aa).

It belongs to the LeuD family. LeuD type 1 subfamily. In terms of assembly, heterodimer of LeuC and LeuD.

It carries out the reaction (2R,3S)-3-isopropylmalate = (2S)-2-isopropylmalate. Its pathway is amino-acid biosynthesis; L-leucine biosynthesis; L-leucine from 3-methyl-2-oxobutanoate: step 2/4. Catalyzes the isomerization between 2-isopropylmalate and 3-isopropylmalate, via the formation of 2-isopropylmaleate. This chain is 3-isopropylmalate dehydratase small subunit, found in Shewanella sp. (strain MR-7).